A 77-amino-acid chain; its full sequence is Conotoxin ArMKLT2-0122 (77 aa).

The signal sequence occupies residues 1-22; sequence MKLTCVLIVAVLFLTACQLIAA. Residues 23 to 44 constitute a propeptide that is removed on maturation; the sequence is DDSRDLKRFSRRKMRDGMLNTK. 3 disulfides stabilise this stretch: C50–C65, C57–C68, and C64–C73.

It belongs to the conotoxin O1 superfamily. As to expression, expressed by the venom duct.

It is found in the secreted. The protein is Conotoxin ArMKLT2-0122 of Conus arenatus (Sand-dusted cone).